The chain runs to 789 residues: ATP-dependent 6-phosphofructokinase (789 aa).

The segment at methionine 1–lysine 404 is N-terminal catalytic PFK domain 1. Residues glycine 41, arginine 104–cysteine 105, and glycine 134–serine 137 contribute to the ATP site. Aspartate 135 contacts Mg(2+). Substrate contacts are provided by residues serine 180–aspartate 182, arginine 217, methionine 224–arginine 226, glutamate 280, arginine 307, and histidine 313–arginine 316. Catalysis depends on aspartate 182, which acts as the Proton acceptor. Residues leucine 405–phenylalanine 419 form an interdomain linker region. The interval asparagine 420–aspartate 789 is C-terminal regulatory PFK domain 2. Residues lysine 489, threonine 547–asparagine 551, arginine 585, methionine 592–glycine 594, glutamate 647, arginine 673, histidine 679–glutamine 682, and arginine 753 contribute to the beta-D-fructose 2,6-bisphosphate site.

This sequence belongs to the phosphofructokinase type A (PFKA) family. ATP-dependent PFK group I subfamily. Eukaryotic two domain clade 'E' sub-subfamily. Homotetramer. Requires Mg(2+) as cofactor.

It localises to the cytoplasm. The catalysed reaction is beta-D-fructose 6-phosphate + ATP = beta-D-fructose 1,6-bisphosphate + ADP + H(+). It functions in the pathway carbohydrate degradation; glycolysis; D-glyceraldehyde 3-phosphate and glycerone phosphate from D-glucose: step 3/4. Its activity is regulated as follows. Allosterically activated by ADP, AMP, or fructose 2,6-bisphosphate, and allosterically inhibited by ATP or citrate. In terms of biological role, catalyzes the phosphorylation of D-fructose 6-phosphate to fructose 1,6-bisphosphate by ATP, the first committing step of glycolysis. The protein is ATP-dependent 6-phosphofructokinase (PFK) of Haemonchus contortus (Barber pole worm).